The primary structure comprises 319 residues: Transmembrane and ubiquitin-like domain-containing protein 2 (319 aa).

A helical membrane pass occupies residues 36 to 56; that stretch reads VMVVAGVVVLTLALVLAWLST. Disordered regions lie at residues 88-130 and 146-165; these read VNQG…GDME and QAGLESSRPEASLGLDDSTC. The span at 95-111 shows a compositional bias: basic and acidic residues; that stretch reads PTEHPHPSGGSDDKAEE. The Ubiquitin-like domain occupies 173–246; the sequence is INVRLKFLND…IHCHRSPPGA (74 aa). Transmembrane regions (helical) follow at residues 264–284 and 293–313; these read LGVNVGSLMVPVFVVLLGVVW and FFTAPATVSLVGVTVFFSFLV.

It localises to the membrane. The sequence is that of Transmembrane and ubiquitin-like domain-containing protein 2 (Tmub2) from Rattus norvegicus (Rat).